The primary structure comprises 447 residues: Probable glycine dehydrogenase (decarboxylating) subunit 1 (447 aa).

This sequence belongs to the GcvP family. N-terminal subunit subfamily. The glycine cleavage system is composed of four proteins: P, T, L and H. In this organism, the P 'protein' is a heterodimer of two subunits.

It carries out the reaction N(6)-[(R)-lipoyl]-L-lysyl-[glycine-cleavage complex H protein] + glycine + H(+) = N(6)-[(R)-S(8)-aminomethyldihydrolipoyl]-L-lysyl-[glycine-cleavage complex H protein] + CO2. In terms of biological role, the glycine cleavage system catalyzes the degradation of glycine. The P protein binds the alpha-amino group of glycine through its pyridoxal phosphate cofactor; CO(2) is released and the remaining methylamine moiety is then transferred to the lipoamide cofactor of the H protein. The polypeptide is Probable glycine dehydrogenase (decarboxylating) subunit 1 (Bacillus cytotoxicus (strain DSM 22905 / CIP 110041 / 391-98 / NVH 391-98)).